A 109-amino-acid polypeptide reads, in one-letter code: Small ribosomal subunit protein uS17 (109 aa).

This sequence belongs to the universal ribosomal protein uS17 family. As to quaternary structure, part of the 30S ribosomal subunit.

Its function is as follows. One of the primary rRNA binding proteins, it binds specifically to the 5'-end of 16S ribosomal RNA. This Thermoplasma acidophilum (strain ATCC 25905 / DSM 1728 / JCM 9062 / NBRC 15155 / AMRC-C165) protein is Small ribosomal subunit protein uS17.